A 141-amino-acid chain; its full sequence is Superoxide dismutase [Cu-Zn], chloroplastic (141 aa).

Residues histidine 33, histidine 35, and histidine 50 each contribute to the Cu cation site. Cysteines 44 and 133 form a disulfide. Positions 50, 58, 67, and 70 each coordinate Zn(2+). Histidine 107 contributes to the Cu cation binding site.

Belongs to the Cu-Zn superoxide dismutase family. In terms of assembly, homotetramer. Requires Cu cation as cofactor. Zn(2+) serves as cofactor.

It is found in the plastid. Its subcellular location is the chloroplast. The catalysed reaction is 2 superoxide + 2 H(+) = H2O2 + O2. Its function is as follows. Destroys radicals which are normally produced within the cells and which are toxic to biological systems. This is Superoxide dismutase [Cu-Zn], chloroplastic (SODCP) from Pinus sylvestris (Scotch pine).